We begin with the raw amino-acid sequence, 541 residues long: Reticulophagy regulator 2 (541 aa).

Helical transmembrane passes span 75–91 (LHSLVTAATLNGLFWLL), 99–115 (FFLLSISLLTYFLLDLW), and 199–219 (VPGIMISYIVLLSILLWPLVV). Positions 249–282 (LHHKHDKRKRQGKNAPPAGDEPLAETESESEAEL) are disordered. A compositionally biased stretch (basic residues) spans 250-260 (HHKHDKRKRQG). Residues 270-280 (PLAETESESEA) show a composition bias toward acidic residues. Phosphothreonine is present on T274. 4 positions are modified to phosphoserine: S276, S278, S286, and S306. Residue T329 is modified to Phosphothreonine. Disordered regions lie at residues 331-389 (VSED…ADKE), 403-440 (THFNGAGSPQEGVKCPPGGPVETLSPEAVSGDLMAPSS), and 459-481 (PSVLPSLPQDSPQALTAPEEEEA). A phosphoserine mark is found at S332, S339, and S342. A compositionally biased stretch (low complexity) spans 459 to 475 (PSVLPSLPQDSPQALTA). The LIR motif motif lies at 485 to 490 (EDFELL). A disordered region spans residues 496–541 (EQLNAELGLGPEMPPKPPDVLPPPPLGPDSHSLVQSDQEAHAVVEP). The span at 507-522 (EMPPKPPDVLPPPPLG) shows a compositional bias: pro residues.

It belongs to the RETREG family. In terms of assembly, interacts with ATG8 family modifier proteins MAP1LC3A, MAP1LC3B, GABARAP, GABARAPL1 and GABARAPL2. Interacts with CANX.

The protein localises to the endoplasmic reticulum membrane. Endoplasmic reticulum (ER)-anchored autophagy regulator which exists in an inactive state under basal conditions but is activated following cellular stress. When activated, induces ER fragmentation and mediates ER delivery into lysosomes through sequestration into autophagosomes via interaction with ATG8 family proteins. Required for collagen quality control in a LIR motif-independent manner. In Rattus norvegicus (Rat), this protein is Reticulophagy regulator 2 (Retreg2).